A 223-amino-acid chain; its full sequence is N-(5'-phosphoribosyl)anthranilate isomerase (223 aa).

It belongs to the TrpF family.

It catalyses the reaction N-(5-phospho-beta-D-ribosyl)anthranilate = 1-(2-carboxyphenylamino)-1-deoxy-D-ribulose 5-phosphate. It participates in amino-acid biosynthesis; L-tryptophan biosynthesis; L-tryptophan from chorismate: step 3/5. This is N-(5'-phosphoribosyl)anthranilate isomerase from Bradyrhizobium diazoefficiens (strain JCM 10833 / BCRC 13528 / IAM 13628 / NBRC 14792 / USDA 110).